A 621-amino-acid polypeptide reads, in one-letter code: UvrABC system protein C (621 aa).

The GIY-YIG domain maps to Thr-11 to Ile-90. The 36-residue stretch at Lys-200 to Thr-235 folds into the UVR domain.

Belongs to the UvrC family. As to quaternary structure, interacts with UvrB in an incision complex.

Its subcellular location is the cytoplasm. Functionally, the UvrABC repair system catalyzes the recognition and processing of DNA lesions. UvrC both incises the 5' and 3' sides of the lesion. The N-terminal half is responsible for the 3' incision and the C-terminal half is responsible for the 5' incision. In Lawsonia intracellularis (strain PHE/MN1-00), this protein is UvrABC system protein C.